The sequence spans 350 residues: 3-dehydroquinate synthase (350 aa).

NAD(+) contacts are provided by residues 106–110, 130–131, K143, and K152; these read GVVGD and TS. Residues E185, H246, and H263 each coordinate Zn(2+).

The protein belongs to the sugar phosphate cyclases superfamily. Dehydroquinate synthase family. NAD(+) serves as cofactor. The cofactor is Co(2+). Requires Zn(2+) as cofactor.

Its subcellular location is the cytoplasm. The catalysed reaction is 7-phospho-2-dehydro-3-deoxy-D-arabino-heptonate = 3-dehydroquinate + phosphate. It functions in the pathway metabolic intermediate biosynthesis; chorismate biosynthesis; chorismate from D-erythrose 4-phosphate and phosphoenolpyruvate: step 2/7. Its function is as follows. Catalyzes the conversion of 3-deoxy-D-arabino-heptulosonate 7-phosphate (DAHP) to dehydroquinate (DHQ). This is 3-dehydroquinate synthase from Clostridium perfringens (strain 13 / Type A).